A 331-amino-acid chain; its full sequence is MDEFQSKAFEVGEEIEPDDNEPLTGEEYLQRVKWHSNRCPSVVVADIDYSKIKVTIPSNSYFTLPPSITKCKKELLPTPTWEKEFLNDFSEFRQKLQYIKSNRPSNNNNNNNNNNNNNNNNNNNNNLIPQLPHINDKRYWYIFCFGSNGNNNNNNNDIKMKDFNDNQEDDDDDENNEDYEYNENKEEEEEEEEEEEEEEEVEEEEEEEEEEEEVVDYSTKKPTLGNKPTMDILCRLDHVLTVALVNYHIEWLEKREFTQERSYWLYMLLSLLEKPIDPDTCSNLRSCIRRLSVFRSKITNLNDPNLPSINILFTIIAKYFDQLEPSDILYL.

3 disordered regions span residues 1–23 (MDEF…NEPL), 101–130 (SNRP…LIPQ), and 151–222 (NNNN…TKKP). Over residues 11 to 21 (VGEEIEPDDNE) the composition is skewed to acidic residues. The segment covering 106–126 (NNNNNNNNNNNNNNNNNNNNN) has biased composition (low complexity). The segment covering 165–215 (DNQEDDDDDENNEDYEYNENKEEEEEEEEEEEEEEEVEEEEEEEEEEEEVV) has biased composition (acidic residues). Residues 173–224 (DENNEDYEYNENKEEEEEEEEEEEEEEEVEEEEEEEEEEEEVVDYSTKKPTL) adopt a coiled-coil conformation.

The protein belongs to the gemin-2 family.

It localises to the nucleus. The protein localises to the gem. The protein resides in the cytoplasm. Functionally, the SMN complex catalyzes the assembly of small nuclear ribonucleoproteins (snRNPs), the building blocks of the spliceosome, and thereby plays an important role in the splicing of cellular pre-mRNAs. Most spliceosomal snRNPs contain a common set of Sm proteins SNRPB, SNRPD1, SNRPD2, SNRPD3, SNRPE, SNRPF and SNRPG that assemble in a heptameric protein ring on the Sm site of the small nuclear RNA to form the core snRNP (Sm core). In the cytosol, the Sm proteins SNRPD1, SNRPD2, SNRPE, SNRPF and SNRPG (5Sm) are trapped in an inactive 6S pICln-Sm complex by the chaperone CLNS1A that controls the assembly of the core snRNP. To assemble core snRNPs, the SMN complex accepts the trapped 5Sm proteins from CLNS1A. Binding of snRNA inside 5Sm ultimately triggers eviction of the SMN complex, thereby allowing binding of SNRPD3 and SNRPB to complete assembly of the core snRNP. Within the SMN complex, GEMIN2 constrains the conformation of 5Sm, thereby promoting 5Sm binding to snRNA containing the snRNP code (a nonameric Sm site and a 3'-adjacent stem-loop), thus preventing progression of assembly until a cognate substrate is bound. May play an essential role in spliceosomal snRNP assembly in the cytoplasm and may be required for pre-mRNA splicing in the nucleus. The protein is Gem-associated protein 2 (gemin2) of Dictyostelium discoideum (Social amoeba).